An 803-amino-acid polypeptide reads, in one-letter code: E3 ubiquitin-protein ligase UHRF2 (803 aa).

Residues 1 to 78 enclose the Ubiquitin-like domain; that stretch reads MWIQVRTIDG…IQLLVRPDSS (78 aa). Composition is skewed to polar residues over residues 79–96, 106–115, 167–181, and 189–200; these read LPST…SSHN, GGSSSQPSTS, KNGS…NVNH, and KLDNVPSTSNSD. 2 disordered regions span residues 79-115 and 154-200; these read LPST…PSTS and RASD…SNSD. The segment at 118–312 is required for interaction with histone H3; that stretch reads TCLIDPGFGL…VDEIFKIEKP (195 aa). An interaction with PCNP region spans residues 195–289; that stretch reads STSNSDSVAA…KEVRVKVFLG (95 aa). The segment at 340-396 adopts a PHD-type zinc-finger fold; that stretch reads DKTCHMCSCHKCGEKRDPNMQLLCDECNMAYHIYCLSPPLDKVPEEEYWYCPSCKTD. Residues 415–645 are methyl-CpG binding and interaction with HDAC1; sequence KMPSASTESR…LQYPAGYPSE (231 aa). In terms of domain architecture, YDG spans 449–613; sequence GPIPGIPVGS…FLVWRYLLRR (165 aa). Residues 643 to 676 form a disordered region; that stretch reads PSEKEGKKTKGQSKKQGSEATKRPASDDECPGDS. A compositionally biased stretch (basic and acidic residues) spans 658–668; sequence QGSEATKRPAS. At serine 668 the chain carries Phosphoserine. The RING-type zinc finger occupies 734–773; that stretch reads CVCCQELVYQPVTTECFHNVCKDCLQRSFKAQVFSCPACR.

Homodimer; disulfide-linked. Binds methylated CpG containing oligonucleotides. Interacts with H3; the interaction has a preference for the 'Lys-9' trimethylated form of H3 (H3K9me3). Interacts with PCNP. Interacts with HDAC1. Interacts directly with CCNE1; the interaction ubiquitinates CCNE1 and appears independent of CCNE1 phosphorylation. Interacts with CCND1; the interaction ubiquitinates CCND1 and appears independent of CCND1 phosphorylation. Interacts with p53/TP53 and RB1. Interacts with UBE2I. Interacts with ZNF618. Interacts with UHRF1. Interacts with FANCD2. Interacts with ATR. Interacts with PCNA. In terms of processing, may be autoubiquitinated; which may lead to proteasomal degradation. Post-translationally, phosphorylated. Phosphorylation may be mediated by CDK2. Autosumoylated. In terms of tissue distribution, mostly detected in several tissues, including the thymus, spleen, lung, adrenal gland, and ovary. In addition, found in several tissues in the brain (cerebellum, hippocampus, and cerebral cortex).

The protein localises to the nucleus. It is found in the chromosome. It carries out the reaction S-ubiquitinyl-[E2 ubiquitin-conjugating enzyme]-L-cysteine + [acceptor protein]-L-lysine = [E2 ubiquitin-conjugating enzyme]-L-cysteine + N(6)-ubiquitinyl-[acceptor protein]-L-lysine.. It participates in protein modification; protein ubiquitination. With respect to regulation, E3 ligase activity is robustly activated by 5-hydroxy-methylcytosine. E3 ubiquitin ligase that plays important roles in DNA methylation, histone modifications, cell cycle and DNA repair. Acts as a specific reader for 5-hydroxymethylcytosine (5hmC) and thereby recruits various substrates to these sites to ubiquitinate them. This activity also allows the maintenance of 5mC levels at specific genomic loci and regulates neuron-related gene expression. Participates in cell cycle regulation by ubiquitinating cyclins CCND1 and CCNE1 and thus inducing G1 arrest. Also ubiquitinates PCNP leading to its degradation by the proteasome. Plays an active role in DNA damage repair by ubiquitinating p21/CDKN1A leading to its proteasomal degradation. Also promotes DNA repair by acting as an interstrand cross-links (ICLs) sensor. Mechanistically, cooperates with UHRF1 to ensure recruitment of FANCD2 to ICLs, leading to FANCD2 monoubiquitination and subsequent activation. Contributes to UV-induced DNA damage response by physically interacting with ATR in response to irradiation, thereby promoting ATR activation. The sequence is that of E3 ubiquitin-protein ligase UHRF2 (Uhrf2) from Mus musculus (Mouse).